We begin with the raw amino-acid sequence, 421 residues long: Putative hydro-lyase KRH_21160 (421 aa).

Disordered regions lie at residues 200–298 (TWGH…SPVT) and 312–421 (TRAG…AVSR). The span at 224–237 (GSRRRPRWWSRLRR) shows a compositional bias: basic residues. Low complexity-rich tracts occupy residues 243–260 (PRATCSSPTPGTPTTRCP) and 370–380 (SRGPGPCPRAA).

The protein belongs to the D-glutamate cyclase family.

The sequence is that of Putative hydro-lyase KRH_21160 from Kocuria rhizophila (strain ATCC 9341 / DSM 348 / NBRC 103217 / DC2201).